The sequence spans 450 residues: N-lysine methyltransferase SETD6 (450 aa).

Residues 1–10 show a composition bias toward basic residues; the sequence is MATQAKRRRV. Residues 1 to 20 form a disordered region; it reads MATQAKRRRVAGPAGSDDDP. The region spanning 39–263 is the SET domain; sequence PKVAVSRQGT…KGHEIFNTYG (225 aa). N6-methylated lysine; by autocatalysis is present on lysine 40. S-adenosyl-L-methionine is bound at residue 50–52; that stretch reads AGY. Position 99 (tryptophan 99) interacts with substrate. Lysine 156 is subject to N6-methylated lysine; by autocatalysis. Tyrosine 200 contributes to the S-adenosyl-L-methionine binding site. Serine 201 and glutamine 203 together coordinate substrate. S-adenosyl-L-methionine contacts are provided by residues 228–229 and tyrosine 274; that span reads NH. N6-methylated lysine; by autocatalysis is present on lysine 349.

It belongs to the class V-like SAM-binding methyltransferase superfamily. Histone-lysine methyltransferase family. SETD6 subfamily. Monomer, homodimer and homotrimer; these structures are stabilized in the presence of S-adenosyl-L-methionine (SAM). Post-translationally, automethylated.

Its subcellular location is the nucleus. The catalysed reaction is L-lysyl-[protein] + S-adenosyl-L-methionine = N(6)-methyl-L-lysyl-[protein] + S-adenosyl-L-homocysteine + H(+). It catalyses the reaction L-lysyl(8)-[histone H2AZ] + S-adenosyl-L-methionine = N(6)-methyl-L-lysyl(8)-[histone H2AZ] + S-adenosyl-L-homocysteine + H(+). Its function is as follows. Protein-lysine N-methyltransferase. Monomethylates 'Lys-310' of the RELA subunit of NF-kappa-B complex, leading to down-regulation of NF-kappa-B transcription factor activity. Monomethylates 'Lys-8' of H2AZ (H2AZK8me1). Required for the maintenance of embryonic stem cell self-renewal. Methylates PAK4. The polypeptide is N-lysine methyltransferase SETD6 (SETD6) (Bos taurus (Bovine)).